Reading from the N-terminus, the 159-residue chain is MGVLEFFGTLLRNDITASSIMSDYKNKLPVNHLLMDFNSIVHVASQKIISDVNSFMQNVLTNLYQNRSLNTTLLNEQFTKYKMQHIQKRINNNTDPIEITKLFNNHFDDKFMDRLIITLVISVLLSIIRTYCTNETMKTLLIAIDGVPSKGKMIEQKQR.

This is an uncharacterized protein from Acanthamoeba polyphaga (Amoeba).